Consider the following 487-residue polypeptide: Sodium-coupled neutral amino acid symporter 1 (487 aa).

Residues 1-74 (MMHFKSGLEL…EYIPGTTSLG (74 aa)) lie on the Cytoplasmic side of the membrane. Position 6 is a phosphoserine (Ser-6). Phosphothreonine is present on Thr-11. Residues Ser-25, Ser-28, Ser-49, and Ser-52 each carry the phosphoserine modification. At Thr-54 the chain carries Phosphothreonine. A Phosphoserine modification is found at Ser-56. Residues 75 to 97 (MSVFNLSNAIMGSGILGLAFALA) form a helical membrane-spanning segment. At 98-112 (NTGILLFLVLLTSVT) the chain is on the extracellular side. The helical transmembrane segment at 113–133 (LLSIYSINLLLICSKETGCMV) threads the bilayer. Over 134-147 (YEKLGEQVFGTTGK) the chain is Cytoplasmic. A helical membrane pass occupies residues 148–168 (FVIFGATSLQNTGAMLSYLFI). Over 169 to 188 (VKNELPSAIKFLMGKEETFS) the chain is Extracellular. A helical transmembrane segment spans residues 189–211 (AWYVDGRVLVVIVTFGIILPLCL). At 212–216 (LKNLG) the chain is on the cytoplasmic side. Residues 217–237 (YLGYTSGFSLSCMVFFLIVVI) traverse the membrane as a helical segment. Over 238-275 (YKKFQIPCIVPELNSTISANSTNADTCTPKYVTFNSKT) the chain is Extracellular. An intrachain disulfide couples Cys-245 to Cys-264. 2 N-linked (GlcNAc...) asparagine glycosylation sites follow: Asn-251 and Asn-257. Residues 276 to 296 (VYALPTIAFAFVCHPSVLPIY) form a helical membrane-spanning segment. Residues 297–312 (SELKDRSQKKMQMVSN) lie on the Cytoplasmic side of the membrane. Residues 313 to 333 (ISFFAMFVMYFLTAIFGYLTF) traverse the membrane as a helical segment. The Extracellular segment spans residues 334-350 (YDNVQSDLLHKYQSKDD). The helical transmembrane segment at 351 to 371 (ILILTVRLAVIVAVILTVPVL) threads the bilayer. Over 372–393 (FFTVRSSLFELAKKTKFNLCRH) the chain is Cytoplasmic. Residues 394 to 414 (TVVTCILLVVINLLVIFIPSM) form a helical membrane-spanning segment. Over 415–416 (KD) the chain is Extracellular. Residues 417-437 (IFGVVGVTSANMLIFILPSSL) form a helical membrane-spanning segment. At 438-452 (YLKITDQDGDKGTQR) the chain is on the cytoplasmic side. Residues 453–473 (IWAALFLGLGVLFSLVSIPLV) traverse the membrane as a helical segment. Residues 474–487 (IYDWACSSSSDEGH) are Extracellular-facing.

It belongs to the amino acid/polyamine transporter 2 family. In terms of processing, N-glycosylation plays an important role in the L-glutamine transport. In terms of tissue distribution, expressed in the cerebral cortex by pyramidal and GABAergic neurons, astrocytes and other non-neuronal cells (at protein level). Expressed in placenta, heart, lung, skeletal muscle, spleen, stomach and testis. Highly expressed in cytotrophoblast cells from term placenta.

It is found in the cell membrane. It carries out the reaction L-glutamine(in) + Na(+)(in) = L-glutamine(out) + Na(+)(out). The catalysed reaction is L-alanine(in) + Na(+)(in) = L-alanine(out) + Na(+)(out). It catalyses the reaction L-asparagine(in) + Na(+)(in) = L-asparagine(out) + Na(+)(out). The enzyme catalyses L-histidine(in) + Na(+)(in) = L-histidine(out) + Na(+)(out). It carries out the reaction L-serine(in) + Na(+)(in) = L-serine(out) + Na(+)(out). The catalysed reaction is L-cysteine(in) + Na(+)(in) = L-cysteine(out) + Na(+)(out). It catalyses the reaction L-methionine(in) + Na(+)(in) = L-methionine(out) + Na(+)(out). The enzyme catalyses glycine(in) + Na(+)(in) = glycine(out) + Na(+)(out). It carries out the reaction L-threonine(in) + Na(+)(in) = L-threonine(out) + Na(+)(out). The catalysed reaction is L-proline(in) + Na(+)(in) = L-proline(out) + Na(+)(out). Its activity is regulated as follows. Inhibited by alpha-(methylamino)isobutyric acid (MeAIB). Inhibited by lithium, potassium, choline ions, N-methylglucamine. The pH dependence has an allosteric effect on the transport. Functionally, symporter that cotransports short-chain neutral amino acids and sodium ions from the extraccellular to the intracellular side of the cell membrane. The transport is elctrogenic, pH dependent and driven by the Na(+) electrochemical gradient. Participates in the astroglia-derived glutamine transport into GABAergic interneurons for neurotransmitter GABA de novo synthesis. May also contributes to amino acid transport in placental trophoblasts. Also regulates synaptic plasticity. The sequence is that of Sodium-coupled neutral amino acid symporter 1 (SLC38A1) from Homo sapiens (Human).